Consider the following 503-residue polypeptide: Putative ribose/galactose/methyl galactoside import ATP-binding protein (503 aa).

ABC transporter domains are found at residues 7–244 (LEMI…VGRE) and 254–498 (VPIG…TGQL). 39–46 (GENGAGKS) serves as a coordination point for ATP.

The protein belongs to the ABC transporter superfamily. Carbohydrate importer 2 (CUT2) (TC 3.A.1.2) family.

It is found in the cell membrane. It carries out the reaction D-ribose(out) + ATP + H2O = D-ribose(in) + ADP + phosphate + H(+). The enzyme catalyses D-galactose(out) + ATP + H2O = D-galactose(in) + ADP + phosphate + H(+). Part of an ABC transporter complex involved in carbohydrate import. Could be involved in ribose, galactose and/or methyl galactoside import. Responsible for energy coupling to the transport system. In Geobacillus kaustophilus (strain HTA426), this protein is Putative ribose/galactose/methyl galactoside import ATP-binding protein.